The sequence spans 328 residues: DNA-directed RNA polymerase subunit alpha 2 (328 aa).

Residues M1 to R234 are alpha N-terminal domain (alpha-NTD). Residues F248–D328 form an alpha C-terminal domain (alpha-CTD) region.

The protein belongs to the RNA polymerase alpha chain family. Homodimer. The RNAP catalytic core consists of 2 alpha, 1 beta, 1 beta' and 1 omega subunit. When a sigma factor is associated with the core the holoenzyme is formed, which can initiate transcription.

The enzyme catalyses RNA(n) + a ribonucleoside 5'-triphosphate = RNA(n+1) + diphosphate. In terms of biological role, DNA-dependent RNA polymerase catalyzes the transcription of DNA into RNA using the four ribonucleoside triphosphates as substrates. The protein is DNA-directed RNA polymerase subunit alpha 2 of Psychromonas ingrahamii (strain DSM 17664 / CCUG 51855 / 37).